The following is a 246-amino-acid chain: Fasciclin-like arabinogalactan protein 11 (246 aa).

The N-terminal stretch at 1–24 is a signal peptide; sequence MATSRTFIFSNLFIFFLVIATTYG. One can recognise an FAS1 domain in the interval 34-179; that stretch reads PTNITAILEK…LAVYQVDQVL (146 aa). N-linked (GlcNAc...) asparagine glycans are attached at residues Asn-36, Asn-68, Asn-141, and Asn-150. Residues 193–222 form a disordered region; the sequence is PAPEKGGSVSKGSASGGDDGGDSTDSSDAE. Ser-219 carries the GPI-anchor amidated serine lipid modification. Residues 220 to 246 constitute a propeptide, removed in mature form; sequence DAERTGFGFGIRITTVAAIAASSSLWI.

Belongs to the fasciclin-like AGP family. Expressed in the sclerenchyma cells of inflorescence stems and siliques.

The protein resides in the cell membrane. In terms of biological role, may be a cell surface adhesion protein. This chain is Fasciclin-like arabinogalactan protein 11 (FLA11), found in Arabidopsis thaliana (Mouse-ear cress).